The primary structure comprises 187 residues: Ribosome-recycling factor (187 aa).

This sequence belongs to the RRF family.

The protein localises to the cytoplasm. Functionally, responsible for the release of ribosomes from messenger RNA at the termination of protein biosynthesis. May increase the efficiency of translation by recycling ribosomes from one round of translation to another. This Flavobacterium johnsoniae (strain ATCC 17061 / DSM 2064 / JCM 8514 / BCRC 14874 / CCUG 350202 / NBRC 14942 / NCIMB 11054 / UW101) (Cytophaga johnsonae) protein is Ribosome-recycling factor.